Here is a 282-residue protein sequence, read N- to C-terminus: Bis(5'-nucleosyl)-tetraphosphatase, symmetrical (282 aa).

Belongs to the Ap4A hydrolase family.

The enzyme catalyses P(1),P(4)-bis(5'-adenosyl) tetraphosphate + H2O = 2 ADP + 2 H(+). Its function is as follows. Hydrolyzes diadenosine 5',5'''-P1,P4-tetraphosphate to yield ADP. This chain is Bis(5'-nucleosyl)-tetraphosphatase, symmetrical, found in Escherichia fergusonii (strain ATCC 35469 / DSM 13698 / CCUG 18766 / IAM 14443 / JCM 21226 / LMG 7866 / NBRC 102419 / NCTC 12128 / CDC 0568-73).